The sequence spans 839 residues: DNA (cytosine-5)-methyltransferase CMT3 (839 aa).

2 disordered regions span residues 1-38 (MAPK…EPVT) and 51-86 (LDEP…KTKD). Residues 19–30 (PKPKKRAPKRAK) are compositionally biased toward basic residues. Residues 51–70 (LDEPIPESEAKSTWPDRYKP) are compositionally biased toward basic and acidic residues. The region spanning 108 to 227 (QIYELNDDAY…LPYDTFEAIQ (120 aa)) is the BAH domain. Residues 269-813 (ATLLDLYSGC…YALGTAFQGL (545 aa)) enclose the SAM-dependent MTase C5-type domain. A Chromo domain is found at 382–447 (FTVDKIVGIS…LGYKSGILPL (66 aa)). Residue Cys-460 is part of the active site.

Belongs to the class I-like SAM-binding methyltransferase superfamily. C5-methyltransferase family. As to quaternary structure, homodimer. Interacts with HP1 and, through its chromodomain, with the N-terminal tail of histone H3 doubly methylated at 'Lys-9' and 'Lys-27'. Binds to JMJ24. Ubiquitinated by JMJ24, subsequently beingargeted to proteasomal degradation thus initiating the destabilization of the heterochromatic state of endogenous silenced loci.

It localises to the nucleus. It carries out the reaction a 2'-deoxycytidine in DNA + S-adenosyl-L-methionine = a 5-methyl-2'-deoxycytidine in DNA + S-adenosyl-L-homocysteine + H(+). Its function is as follows. Involved in the CpXpG methylation (e.g. CHG cytosine) and in gene silencing. Methylates preferentially transposon-related sequences. Functionally redundant to DRM1/DRM2 to maintain non-CpG methylation. Involved in RNA-directed DNA methylation. This chain is DNA (cytosine-5)-methyltransferase CMT3, found in Arabidopsis thaliana (Mouse-ear cress).